Reading from the N-terminus, the 334-residue chain is MTIIVTGAAGFIGSNIVKALNQRGITDIVAVDNLSKGEKFKNLAECEIAHYLDKHEFIRQVREHILPYQNIEAVFHQGACSDTMNHDGLYMMDNNYQYTLDLLDWCQDERIPFLYASSAAVYGKGEIFREERELEKPLNVYGYSKFLFDQVLRRRMKEGLTAQVVGFRYFNVYGQHEQHKGRMASVAFHHFHQYREHGYVNLFGSNDGYGNGEQTRDFVSVEDVAKVNLYFFDHPELSGIYNLGTGRSQQFNELAAATVNACRAAEGKPEMSLKELVEEELIRYIPFPDALKGKYQSFTQADITKLREAGYTEEFFDVKSGVERYVKWMLENLA.

NADP(+) is bound by residues 11 to 12 (FI), 32 to 33 (DN), K39, K54, 77 to 81 (QGACS), and N94. Catalysis depends on Y141, which acts as the Proton acceptor. K145 is an NADP(+) binding site. A substrate-binding site is contributed by N171. The NADP(+) site is built by V172 and K180. The active-site Proton acceptor is K180. Residues R182, H189, 203-206 (FGSN), R216, and Y295 each bind substrate.

The protein belongs to the NAD(P)-dependent epimerase/dehydratase family. HldD subfamily. Homopentamer. The cofactor is NADP(+).

The enzyme catalyses ADP-D-glycero-beta-D-manno-heptose = ADP-L-glycero-beta-D-manno-heptose. The protein operates within nucleotide-sugar biosynthesis; ADP-L-glycero-beta-D-manno-heptose biosynthesis; ADP-L-glycero-beta-D-manno-heptose from D-glycero-beta-D-manno-heptose 7-phosphate: step 4/4. Its function is as follows. Catalyzes the interconversion between ADP-D-glycero-beta-D-manno-heptose and ADP-L-glycero-beta-D-manno-heptose via an epimerization at carbon 6 of the heptose. The sequence is that of ADP-L-glycero-D-manno-heptose-6-epimerase from Neisseria meningitidis serogroup C (strain 053442).